The chain runs to 1228 residues: ABC transporter B family member 16 (1228 aa).

Transmembrane regions (helical) follow at residues 22–42, 69–89, 145–167, 171–193, 251–271, and 283–303; these read MGLG…LFFI, LAML…GYCW, LPNI…MLLW, IVGF…ALIG, GIAI…TWYG, and GTVS…GQAL. An ABC transmembrane type-1 1 domain is found at 22–311; the sequence is MGLGLIGAVG…ALSNLKYFSE (290 aa). One can recognise an ABC transporter 1 domain in the interval 346–582; it reads VEFNNVKCKY…DGKYTSLVRL (237 aa). 381-388 contacts ATP; the sequence is GGSGSGKS. N-linked (GlcNAc...) asparagine glycans are attached at residues Asn-529, Asn-593, and Asn-628. In terms of domain architecture, ABC transmembrane type-1 2 spans 658 to 946; the sequence is ALCGCLSASL…AGTMTTDLAK (289 aa). 2 helical membrane passes run 667–687 and 700–720; these read LGGA…SVFF and IYVL…ISQQ. N-linked (GlcNAc...) asparagine glycosylation is present at Asn-755. 2 helical membrane passes run 781–801 and 805–825; these read LLVQ…VIAW and IVMI…RVLL. Asn-827 carries N-linked (GlcNAc...) asparagine glycosylation. The next 2 helical transmembrane spans lie at 881-901 and 920-940; these read SWLA…TSAL and FFEL…AGTM. Residues 981–1219 form the ABC transporter 2 domain; sequence ITFLNVDFAY…GPTGSYFSLV (239 aa). An N-linked (GlcNAc...) asparagine glycan is attached at Asn-1001. Position 1016-1023 (1016-1023) interacts with ATP; that stretch reads GPSRSGKS.

Belongs to the ABC transporter superfamily. ABCB family. Multidrug resistance exporter (TC 3.A.1.201) subfamily.

The protein resides in the membrane. The chain is ABC transporter B family member 16 (ABCB16) from Arabidopsis thaliana (Mouse-ear cress).